The following is a 588-amino-acid chain: Neopullulanase (588 aa).

5 residues coordinate Ca(2+): asparagine 147, asparagine 149, serine 153, glycine 172, and aspartate 174. 2 residues coordinate substrate: histidine 247 and arginine 326. Aspartate 328 (nucleophile) is an active-site residue. Glutamate 357 serves as the catalytic Proton donor. Residues 423 to 424 (HD), aspartate 468, and arginine 472 contribute to the substrate site.

Belongs to the glycosyl hydrolase 13 family. As to quaternary structure, homodimer. Ca(2+) is required as a cofactor.

It catalyses the reaction Hydrolysis of pullulan to panose (6-alpha-D-glucosylmaltose).. In terms of biological role, hydrolyzes pullulan efficiently but only a small amount of starch. Endohydrolysis of 1,4-alpha-glucosidic linkages in pullulan to form panose. Also cleaves (1-6)-alpha-glucosidic linkages to form maltotriose. In Geobacillus stearothermophilus (Bacillus stearothermophilus), this protein is Neopullulanase (nplT).